Reading from the N-terminus, the 362-residue chain is Chalcone synthase A (362 aa).

Residue cysteine 168 is part of the active site.

Belongs to the thiolase-like superfamily. Chalcone/stilbene synthases family.

It catalyses the reaction (E)-4-coumaroyl-CoA + 3 malonyl-CoA + 3 H(+) = 2',4,4',6'-tetrahydroxychalcone + 3 CO2 + 4 CoA. It functions in the pathway secondary metabolite biosynthesis; flavonoid biosynthesis. In terms of biological role, the primary product of this enzyme is 4,2',4',6'-tetrahydroxychalcone (also termed naringenin-chalcone or chalcone) which can under specific conditions spontaneously isomerize into naringenin. This Ipomoea triloba (Trilobed morning glory) protein is Chalcone synthase A (CHSA).